A 271-amino-acid polypeptide reads, in one-letter code: MNEAGTPINPIAFQLGPLSVHWYGIIIGAGALLGLWMAMRESEKRGLKKDIFIDLVLFAIPIAIICARAYYVLFEWSYYSEHPGEIIKIWKGGIAIHGGLIGAIATGIVFSKVRGISFWKLADIAAPSILLGQAIGRWGNFINQEAHGEAVSRSFLESLHLPDFIINQMYIDGQYYHPTFLYESLWSFAGVVILLLLRRVNLRRGNLFLTYVIWYSIGRYFIEGMRTDSLMLTSQLRIAQVISIVLIVLAIILMIFRRMKGYADKRYADTD.

4 helical membrane passes run 18–38, 51–71, 89–109, and 115–135; these read LSVHWYGIIIGAGALLGLWMA, IFIDLVLFAIPIAIICARAYY, IWKGGIAIHGGLIGAIATGIV, and GISFWKLADIAAPSILLGQAI. Residue R137 participates in a 1,2-diacyl-sn-glycero-3-phospho-(1'-sn-glycerol) binding. 3 helical membrane-spanning segments follow: residues 177-197, 205-225, and 236-256; these read HPTFLYESLWSFAGVVILLLL, GNLFLTYVIWYSIGRYFIEGM, and LRIAQVISIVLIVLAIILMIF.

Belongs to the Lgt family.

The protein localises to the cell membrane. It catalyses the reaction L-cysteinyl-[prolipoprotein] + a 1,2-diacyl-sn-glycero-3-phospho-(1'-sn-glycerol) = an S-1,2-diacyl-sn-glyceryl-L-cysteinyl-[prolipoprotein] + sn-glycerol 1-phosphate + H(+). Its pathway is protein modification; lipoprotein biosynthesis (diacylglyceryl transfer). Its function is as follows. Catalyzes the transfer of the diacylglyceryl group from phosphatidylglycerol to the sulfhydryl group of the N-terminal cysteine of a prolipoprotein, the first step in the formation of mature lipoproteins. In Bacillus velezensis (strain DSM 23117 / BGSC 10A6 / LMG 26770 / FZB42) (Bacillus amyloliquefaciens subsp. plantarum), this protein is Phosphatidylglycerol--prolipoprotein diacylglyceryl transferase.